Reading from the N-terminus, the 601-residue chain is Peptide transporter PTR2 (601 aa).

Residues 1–10 (MLNHPSQGSD) show a composition bias toward polar residues. Residues 1-66 (MLNHPSQGSD…DEDFEGPTEE (66 aa)) form a disordered region. The Extracellular segment spans residues 1–150 (MLNHPSQGSD…PVFGGYVADT (150 aa)). Basic and acidic residues predominate over residues 14–28 (DEKQGDFPVIEEEKT). Tyr37 bears the Phosphotyrosine mark. Phosphoserine is present on residues Ser39 and Ser45. A compositionally biased stretch (polar residues) spans 42 to 53 (VANSTERYNLSP). Acidic residues predominate over residues 55–66 (PEDEDFEGPTEE). The chain crosses the membrane as a helical span at residues 151 to 172 (FWGKYNTICCGTAIYIAGIFIL). Residues 173–182 (FITSIPSVGN) are Cytoplasmic-facing. The chain crosses the membrane as a helical span at residues 183-202 (RDSAIGGFIAAIILIGIATG). Topologically, residues 203-210 (MIKANLSV) are extracellular. A helical transmembrane segment spans residues 211–229 (LIADQLPKRKPSIKVLKSG). Topologically, residues 230–267 (ERVIVDSNITLQNVFMFFYFMINVGSLSLMATTELEYH) are cytoplasmic. Residues 268–287 (KGFWAAYLLPFCFFWIAVVT) traverse the membrane as a helical segment. The Extracellular portion of the chain corresponds to 288 to 294 (LIFGKKQ). A helical membrane pass occupies residues 295-316 (YIQRPIGDKVIAKSFKVCWILT). At 317–378 (KNKFDFNAAK…ISSFITQASM (62 aa)) the chain is on the cytoplasmic side. Residues 379–399 (MELHGIPNDFLQAFDSIALII) traverse the membrane as a helical segment. Over 400-412 (FIPIFEKFVYPFI) the chain is Extracellular. The helical transmembrane segment at 413–429 (RRYTPLKPITKIFFGFM) threads the bilayer. Topologically, residues 430–448 (FGSFAMTWAAVLQSFVYKA) are cytoplasmic. The chain crosses the membrane as a helical span at residues 449-466 (GPWYNEPLGHNTPNHVHV). The Extracellular segment spans residues 467 to 494 (CWQIPAYVLISFSEIFASITGLEYAYSK). Residues 495–513 (APASMKSFIMSIFLLTNAF) traverse the membrane as a helical segment. The Cytoplasmic segment spans residues 514–526 (GSAIGCALSPVTV). The helical transmembrane segment at 527-547 (DPKFTWLFTGLAVACFISGCL) threads the bilayer. Residues 548–554 (FWLCFRK) are Extracellular-facing. The helical transmembrane segment at 555-577 (YNDTEEEMNAMDYEEEDEFDLNP) threads the bilayer. The Cytoplasmic portion of the chain corresponds to 578–601 (ISAPKANDIEILEPMESLRSTTKY). Ser594 bears the Phosphoserine mark.

Belongs to the major facilitator superfamily. Proton-dependent oligopeptide transporter (POT/PTR) (TC 2.A.17) family.

Its subcellular location is the membrane. In terms of biological role, uptake of small peptides. The protein is Peptide transporter PTR2 (PTR2) of Saccharomyces cerevisiae (strain ATCC 204508 / S288c) (Baker's yeast).